We begin with the raw amino-acid sequence, 517 residues long: Transcription factor MTB3 (517 aa).

The disordered stretch occupies residues G290–N331. Basic and acidic residues predominate over residues R297 to K314. Positions E327–R340 are basic motif; degenerate. Residues E327–L376 form the bHLH domain. Residues E341 to L376 are helix-loop-helix motif.

It is found in the nucleus. Functionally, transcription factor that negatively regulates jasmonate (JA) signaling. Negatively regulates JA-dependent response to wounding, JA-induced expression of defense genes, JA-dependent responses against herbivorous insects, and JA-dependent resistance against Botrytis cinerea infection. Plays a positive role in resistance against the bacterial pathogen Pseudomonas syringae pv tomato DC3000. The protein is Transcription factor MTB3 of Solanum lycopersicum (Tomato).